Here is a 442-residue protein sequence, read N- to C-terminus: Proline--tRNA ligase (442 aa).

Belongs to the class-II aminoacyl-tRNA synthetase family. ProS type 2 subfamily. In terms of assembly, homodimer.

The protein localises to the cytoplasm. The catalysed reaction is tRNA(Pro) + L-proline + ATP = L-prolyl-tRNA(Pro) + AMP + diphosphate. Catalyzes the attachment of proline to tRNA(Pro) in a two-step reaction: proline is first activated by ATP to form Pro-AMP and then transferred to the acceptor end of tRNA(Pro). The protein is Proline--tRNA ligase of Rhizobium meliloti (strain 1021) (Ensifer meliloti).